The primary structure comprises 201 residues: Ribonuclease HII (201 aa).

The RNase H type-2 domain maps to 12-201 (DLVAGVDEVG…VRELLDASVE (190 aa)). Residues aspartate 18, glutamate 19, and aspartate 110 each coordinate a divalent metal cation.

The protein belongs to the RNase HII family. Mn(2+) is required as a cofactor. Mg(2+) serves as cofactor.

The protein resides in the cytoplasm. It carries out the reaction Endonucleolytic cleavage to 5'-phosphomonoester.. Functionally, endonuclease that specifically degrades the RNA of RNA-DNA hybrids. The protein is Ribonuclease HII of Pseudomonas paraeruginosa (strain DSM 24068 / PA7) (Pseudomonas aeruginosa (strain PA7)).